The sequence spans 203 residues: Pyridoxal 5'-phosphate synthase subunit PdxT (203 aa).

52–54 (GES) is an L-glutamine binding site. Cys-84 acts as the Nucleophile in catalysis. L-glutamine-binding positions include Arg-116 and 144-145 (IR). Residues His-184 and Glu-186 each act as charge relay system in the active site.

The protein belongs to the glutaminase PdxT/SNO family. As to quaternary structure, in the presence of PdxS, forms a dodecamer of heterodimers. Only shows activity in the heterodimer.

The catalysed reaction is aldehydo-D-ribose 5-phosphate + D-glyceraldehyde 3-phosphate + L-glutamine = pyridoxal 5'-phosphate + L-glutamate + phosphate + 3 H2O + H(+). The enzyme catalyses L-glutamine + H2O = L-glutamate + NH4(+). The protein operates within cofactor biosynthesis; pyridoxal 5'-phosphate biosynthesis. Its function is as follows. Catalyzes the hydrolysis of glutamine to glutamate and ammonia as part of the biosynthesis of pyridoxal 5'-phosphate. The resulting ammonia molecule is channeled to the active site of PdxS. This is Pyridoxal 5'-phosphate synthase subunit PdxT from Aeropyrum pernix (strain ATCC 700893 / DSM 11879 / JCM 9820 / NBRC 100138 / K1).